The chain runs to 537 residues: Zinc finger protein Noc (537 aa).

2 disordered regions span residues asparagine 64–asparagine 116 and asparagine 138–arginine 212. The segment covering alanine 70–asparagine 116 has biased composition (low complexity). Serine 98 and serine 157 each carry phosphoserine. 2 stretches are compositionally biased toward polar residues: residues asparagine 138–proline 177 and histidine 188–glycine 206. Serine 208 is subject to Phosphoserine. The C2H2-type zinc finger occupies tyrosine 402–histidine 430.

It belongs to the Elbow/Noc family. As to quaternary structure, interacts with elB. In terms of tissue distribution, highly expressed in the adult head.

In terms of biological role, may negatively regulate Notch-induced cell proliferation in the eye-head primordium. Required for development of the supraesophageal ganglion and ocelli. May act in leg and wing primordia to negatively regulate body-wall specifying genes and thereby promote appendage formation. Plays a role in tracheal development. This Drosophila melanogaster (Fruit fly) protein is Zinc finger protein Noc (noc).